We begin with the raw amino-acid sequence, 244 residues long: Aliphatic sulfonates import ATP-binding protein SsuB 2 (244 aa).

Residues 13–229 (VQVRSLVRGF…ALGDSKFHEF (217 aa)) enclose the ABC transporter domain. 45 to 52 (GKSGSGKS) serves as a coordination point for ATP.

Belongs to the ABC transporter superfamily. Aliphatic sulfonates importer (TC 3.A.1.17.2) family. The complex is composed of two ATP-binding proteins (SsuB), two transmembrane proteins (SsuC) and a solute-binding protein (SsuA).

The protein resides in the cell membrane. It carries out the reaction ATP + H2O + aliphatic sulfonate-[sulfonate-binding protein]Side 1 = ADP + phosphate + aliphatic sulfonateSide 2 + [sulfonate-binding protein]Side 1.. In terms of biological role, part of the ABC transporter complex SsuABC involved in aliphatic sulfonates import. Responsible for energy coupling to the transport system. The protein is Aliphatic sulfonates import ATP-binding protein SsuB 2 of Rhodococcus jostii (strain RHA1).